A 469-amino-acid chain; its full sequence is MSFIDSLATLGQYLPAVTKPKEKPSLGQKLVWSLVAVIIYLIMASTPLYGITSASFFKNLILEQIIFASTTGTLAQLGIGPIITAGLIMQILAGSKLISIDLNDPDDRVKFTEAQKGLAFIFILVESALFGYVLARTSTTINASILFIAGIVIAQLIVATYLILLLDELIQKGWGLGSGVSLFILAGVMKIMFWDMFGIASVSSQNLPIGFFPALFTALASHSDVLNLIVNTSTKNLFQPDLVGLVTTIALIIITIYLTTMTIEIPVTSQKLRGIRRTIPLNFLYVSSIPVIFVAVLGSDIQLFASLASYVSPSASNILNTVSGVFFFPPPNSAIPHSIYAVVLDPLGALEYAVVFIVLSILFGILWVDVAGLDPATQAQQLVEAGIEIPGVRNNPKIIEGILARYIYPLAFFSSIIVGLIAVFATLLGAYGTGIGILLAVTIAIQYYSLLAYERSLEMYPLLKRLIGE.

The Cytoplasmic segment spans residues 1 to 20 (MSFIDSLATLGQYLPAVTKP). A helical membrane pass occupies residues 21 to 47 (KEKPSLGQKLVWSLVAVIIYLIMASTP). Residues 48–59 (LYGITSASFFKN) lie on the Extracellular side of the membrane. The segment at residues 60-67 (LILEQIIF) is an intramembrane region (helical). The chain crosses the membrane as a discontinuously helical span at residues 60 to 88 (LILEQIIFASTTGTLAQLGIGPIITAGLI). An intramembrane segment occupies 68 to 79 (ASTTGTLAQLGI). Residues 80–88 (GPIITAGLI) constitute an intramembrane region (helical). Topologically, residues 89–109 (MQILAGSKLISIDLNDPDDRV) are cytoplasmic. The helical transmembrane segment at 110–131 (KFTEAQKGLAFIFILVESALFG) threads the bilayer. Over 132–146 (YVLARTSTTINASIL) the chain is Extracellular. A helical membrane pass occupies residues 147-171 (FIAGIVIAQLIVATYLILLLDELIQ). The Cytoplasmic segment spans residues 172 to 178 (KGWGLGS). The helical transmembrane segment at 179–197 (GVSLFILAGVMKIMFWDMF) threads the bilayer. Over 198-240 (GIASVSSQNLPIGFFPALFTALASHSDVLNLIVNTSTKNLFQP) the chain is Extracellular. Residues 241–262 (DLVGLVTTIALIIITIYLTTMT) form a helical membrane-spanning segment. The Cytoplasmic segment spans residues 263–287 (IEIPVTSQKLRGIRRTIPLNFLYVS). A helical transmembrane segment spans residues 288 to 309 (SIPVIFVAVLGSDIQLFASLAS). At 310–347 (YVSPSASNILNTVSGVFFFPPPNSAIPHSIYAVVLDPL) the chain is on the extracellular side. A helical transmembrane segment spans residues 348–367 (GALEYAVVFIVLSILFGILW). Residues 368–410 (VDVAGLDPATQAQQLVEAGIEIPGVRNNPKIIEGILARYIYPL) are Cytoplasmic-facing. A helical membrane pass occupies residues 411 to 429 (AFFSSIIVGLIAVFATLLG). Residues 430-432 (AYG) lie on the Extracellular side of the membrane. The helical transmembrane segment at 433 to 447 (TGIGILLAVTIAIQY) threads the bilayer. At 448-469 (YSLLAYERSLEMYPLLKRLIGE) the chain is on the cytoplasmic side.

Belongs to the SecY/SEC61-alpha family. As to quaternary structure, component of the Sec protein translocase complex. Heterotrimer consisting of alpha (SecY), beta (SecG) and gamma (SecE) subunits. The heterotrimers can form oligomers, although 1 heterotrimer is thought to be able to translocate proteins. Interacts with the ribosome. May interact with SecDF, and other proteins may be involved.

It localises to the cell membrane. In terms of biological role, the central subunit of the protein translocation channel SecYEG. Consists of two halves formed by TMs 1-5 and 6-10. These two domains form a lateral gate at the front which open onto the bilayer between TMs 2 and 7, and are clamped together by SecE at the back. The channel is closed by both a pore ring composed of hydrophobic SecY resides and a short helix (helix 2A) on the extracellular side of the membrane which forms a plug. The plug probably moves laterally to allow the channel to open. The ring and the pore may move independently. The protein is Protein translocase subunit SecY of Saccharolobus solfataricus (strain ATCC 35092 / DSM 1617 / JCM 11322 / P2) (Sulfolobus solfataricus).